We begin with the raw amino-acid sequence, 116 residues long: Class I hydrophobin 1 (116 aa).

Positions 1 to 19 (MLFKQAILVATTLTDLAVA) are cleaved as a signal peptide. 4 cysteine pairs are disulfide-bonded: Cys-35/Cys-95, Cys-42/Cys-89, Cys-43/Cys-76, and Cys-96/Cys-109. N-linked (GlcNAc...) asparagine glycans are attached at residues Asn-44 and Asn-100.

The protein belongs to the fungal hydrophobin family. As to quaternary structure, self-assembles to form functional amyloid fibrils called rodlets. Self-assembly into fibrillar rodlets occurs spontaneously at hydrophobic:hydrophilic interfaces and the rodlets further associate laterally to form amphipathic monolayers.

Its subcellular location is the secreted. It localises to the cell wall. Its function is as follows. Aerial growth, conidiation, and dispersal of filamentous fungi in the environment rely upon a capability of their secreting small amphipathic proteins called hydrophobins (HPBs) with low sequence identity. Class I can self-assemble into an outermost layer of rodlet bundles on aerial cell surfaces, conferring cellular hydrophobicity that supports fungal growth, development and dispersal; whereas Class II form highly ordered films at water-air interfaces through intermolecular interactions but contribute nothing to the rodlet structure. The chain is Class I hydrophobin 1 from Pleurotus ostreatus (Oyster mushroom).